A 292-amino-acid polypeptide reads, in one-letter code: Ribosomal protein L11 methyltransferase (292 aa).

Positions 144, 165, 187, and 229 each coordinate S-adenosyl-L-methionine.

It belongs to the methyltransferase superfamily. PrmA family.

Its subcellular location is the cytoplasm. The enzyme catalyses L-lysyl-[protein] + 3 S-adenosyl-L-methionine = N(6),N(6),N(6)-trimethyl-L-lysyl-[protein] + 3 S-adenosyl-L-homocysteine + 3 H(+). Functionally, methylates ribosomal protein L11. In Pseudomonas fluorescens (strain Pf0-1), this protein is Ribosomal protein L11 methyltransferase.